A 298-amino-acid polypeptide reads, in one-letter code: Serine/threonine-protein kinase 1 (298 aa).

A Protein kinase domain is found at 38 to 276 (FIATRPMFEG…FKSLVSHPWF (239 aa)). ATP is bound by residues 45 to 53 (FEGGRNNVF) and K65. D152 serves as the catalytic Proton acceptor.

This sequence belongs to the protein kinase superfamily. Ser/Thr protein kinase family.

It localises to the virion. It is found in the host cytoplasm. It catalyses the reaction L-seryl-[protein] + ATP = O-phospho-L-seryl-[protein] + ADP + H(+). The enzyme catalyses L-threonyl-[protein] + ATP = O-phospho-L-threonyl-[protein] + ADP + H(+). Essential for viral replication. It may mediate the virus' progression through DNA replication. In Ornithodoros (relapsing fever ticks), this protein is Serine/threonine-protein kinase 1.